We begin with the raw amino-acid sequence, 49 residues long: Large ribosomal subunit protein bL33C (49 aa).

The disordered stretch occupies residues asparagine 20 to lysine 49. The span at asparagine 25–lysine 49 shows a compositional bias: basic and acidic residues.

It belongs to the bacterial ribosomal protein bL33 family.

This Enterococcus faecalis (strain ATCC 700802 / V583) protein is Large ribosomal subunit protein bL33C (rpmG3).